A 297-amino-acid chain; its full sequence is tRNA dimethylallyltransferase (297 aa).

ATP is bound at residue 10-17; it reads GITASGKS. 12–17 serves as a coordination point for substrate; that stretch reads TASGKS. Residues 36–39 form an interaction with substrate tRNA region; it reads DSKQ.

The protein belongs to the IPP transferase family. As to quaternary structure, monomer. Mg(2+) is required as a cofactor.

It carries out the reaction adenosine(37) in tRNA + dimethylallyl diphosphate = N(6)-dimethylallyladenosine(37) in tRNA + diphosphate. Functionally, catalyzes the transfer of a dimethylallyl group onto the adenine at position 37 in tRNAs that read codons beginning with uridine, leading to the formation of N6-(dimethylallyl)adenosine (i(6)A). The chain is tRNA dimethylallyltransferase from Wolbachia pipientis subsp. Culex pipiens (strain wPip).